The chain runs to 593 residues: UvrABC system protein C (593 aa).

The 78-residue stretch at 17-94 (MEPGCYLMKD…IKQYQPRYNI (78 aa)) folds into the GIY-YIG domain. The 36-residue stretch at 199 to 234 (KTILKSLEERMLTASESLDFERAKEYRDLIQHIQNL) folds into the UVR domain.

This sequence belongs to the UvrC family. As to quaternary structure, interacts with UvrB in an incision complex.

It localises to the cytoplasm. Functionally, the UvrABC repair system catalyzes the recognition and processing of DNA lesions. UvrC both incises the 5' and 3' sides of the lesion. The N-terminal half is responsible for the 3' incision and the C-terminal half is responsible for the 5' incision. This chain is UvrABC system protein C, found in Staphylococcus aureus (strain MRSA252).